The following is a 250-amino-acid chain: uncharacterized protein (250 aa).

Disordered stretches follow at residues 85–107 (NQFPKQEPQTSTQPVNVQPQSEP) and 158–198 (EPVP…AKVP). Residues 167–176 (PAVEQPQVKQ) are compositionally biased toward low complexity.

This is an uncharacterized protein from Mycoplasma pneumoniae (strain ATCC 29342 / M129 / Subtype 1) (Mycoplasmoides pneumoniae).